A 443-amino-acid chain; its full sequence is Mitochondrial distribution and morphology protein 10 (443 aa).

It belongs to the MDM10 family. Component of the ER-mitochondria encounter structure (ERMES) or MDM complex, composed of MMM1, MDM10, MDM12 and MDM34. Associates with the mitochondrial outer membrane sorting assembly machinery SAM(core) complex.

Its subcellular location is the mitochondrion outer membrane. Component of the ERMES/MDM complex, which serves as a molecular tether to connect the endoplasmic reticulum and mitochondria. Components of this complex are involved in the control of mitochondrial shape and protein biogenesis and may function in phospholipid exchange. MDM10 is involved in the late assembly steps of the general translocase of the mitochondrial outer membrane (TOM complex). Functions in the TOM40-specific route of the assembly of outer membrane beta-barrel proteins, including the association of TOM40 with the receptor TOM22 and small TOM proteins. Can associate with the SAM(core) complex as well as the MDM12-MMM1 complex, both involved in late steps of the major beta-barrel assembly pathway, that is responsible for biogenesis of all outer membrane beta-barrel proteins. May act as a switch that shuttles between both complexes and channels precursor proteins into the TOM40-specific pathway. Plays a role in mitochondrial morphology and in the inheritance of mitochondria. The chain is Mitochondrial distribution and morphology protein 10 from Pyricularia oryzae (strain 70-15 / ATCC MYA-4617 / FGSC 8958) (Rice blast fungus).